Here is a 206-residue protein sequence, read N- to C-terminus: Isochorismatase family protein 1B (206 aa).

Belongs to the isochorismatase family.

This is Isochorismatase family protein 1B from Dictyostelium discoideum (Social amoeba).